The primary structure comprises 290 residues: Arylamine N-acetyltransferase 2 (290 aa).

Residue Cys-68 is the Acyl-thioester intermediate of the active site. Positions 103 and 104 each coordinate CoA. Ile-106 to His-107 contacts substrate. Catalysis depends on residues His-107 and Asp-122. A CoA-binding site is contributed by Tyr-208.

It belongs to the arylamine N-acetyltransferase family.

The protein localises to the cytoplasm. The catalysed reaction is an arylamine + acetyl-CoA = an N-acetylarylamine + CoA. It carries out the reaction an N-hydroxyarylamine + acetyl-CoA = an N-acetoxyarylamine + CoA. Catalyzes the N- or O-acetylation of various arylamine and heterocyclic amine substrates, and participates in the detoxification of a plethora of hydrazine and arylamine drugs. In Mesocricetus auratus (Golden hamster), this protein is Arylamine N-acetyltransferase 2 (NAT2).